The primary structure comprises 435 residues: Trigger factor (435 aa).

The PPIase FKBP-type domain maps to 163–248; the sequence is GDFVTFDFKG…VKEIKVKELP (86 aa).

It belongs to the FKBP-type PPIase family. Tig subfamily.

The protein localises to the cytoplasm. The enzyme catalyses [protein]-peptidylproline (omega=180) = [protein]-peptidylproline (omega=0). Its function is as follows. Involved in protein export. Acts as a chaperone by maintaining the newly synthesized protein in an open conformation. Functions as a peptidyl-prolyl cis-trans isomerase. This Geobacter sp. (strain M21) protein is Trigger factor.